Consider the following 339-residue polypeptide: UPF0450 protein C17orf58 (339 aa).

Residues 1-17 (MTARAFWLLCLIVGSSP) form the signal peptide. Residues 17–191 (PEAPVAERKT…PQRDAEPGAE (175 aa)) are disordered. Basic and acidic residues predominate over residues 21–36 (VAERKTSPPHSRKPDS). A compositionally biased stretch (low complexity) spans 56–72 (APQRPRAAEVAPAARAW). The segment covering 112–125 (ASPRREPASEDAPR) has biased composition (basic and acidic residues). Low complexity predominate over residues 132-163 (LRFPAARPPALATEGSAGHAHPNRPRAAALAP). 3 cysteine pairs are disulfide-bonded: Cys-193–Cys-267, Cys-197–Cys-271, and Cys-208–Cys-338. One can recognise an NTR domain in the interval 193–338 (CARACRSDLD…QIQGAIHTQC (146 aa)).

This sequence belongs to the UPF0450 family.

The protein is UPF0450 protein C17orf58 (C17orf58) of Homo sapiens (Human).